The sequence spans 533 residues: WD repeat-containing protein PAC11 (533 aa).

The span at 1 to 19 (MERLKQLEEKRRQLKELRE) shows a compositional bias: basic and acidic residues. The tract at residues 1–36 (MERLKQLEEKRRQLKELRERRKQASLFPGSETMGHH) is disordered. WD repeat units follow at residues 380 to 422 (FDEV…YLSL) and 432 to 475 (NHST…AIIG).

Interacts with NUM1, when DYN1 is present.

It localises to the cytoplasm. The protein resides in the cytoskeleton. Its function is as follows. Required for viability in the absence of the kinesin-related CIN8 mitotic motor. May be a dynein intermediate chain. The protein is WD repeat-containing protein PAC11 (PAC11) of Saccharomyces cerevisiae (strain ATCC 204508 / S288c) (Baker's yeast).